Reading from the N-terminus, the 297-residue chain is D-alanine--D-alanine ligase (297 aa).

The region spanning 95–294 (KMLWKAFGLP…FEQLVVKILE (200 aa)) is the ATP-grasp domain. 125–180 (VAKLGLPLMVKPSLEGSSVGLTKVKAVEELKSAVEYALKFDNTILIEEWLAGDELT) is an ATP binding site. Mg(2+) is bound by residues D248, E261, and N263.

The protein belongs to the D-alanine--D-alanine ligase family. Requires Mg(2+) as cofactor. It depends on Mn(2+) as a cofactor.

The protein localises to the cytoplasm. It catalyses the reaction 2 D-alanine + ATP = D-alanyl-D-alanine + ADP + phosphate + H(+). The protein operates within cell wall biogenesis; peptidoglycan biosynthesis. In terms of biological role, cell wall formation. The protein is D-alanine--D-alanine ligase of Haemophilus influenzae (strain PittEE).